Reading from the N-terminus, the 221-residue chain is DNA mismatch repair protein MutH (221 aa).

This sequence belongs to the MutH family.

The protein resides in the cytoplasm. Functionally, sequence-specific endonuclease that cleaves unmethylated GATC sequences. It is involved in DNA mismatch repair. The chain is DNA mismatch repair protein MutH from Vibrio cholerae serotype O1 (strain ATCC 39315 / El Tor Inaba N16961).